The following is a 171-amino-acid chain: uncharacterized protein (171 aa).

A signal peptide spans 1 to 20 (MRRVLFSCFCGLLWSSSGWA). C40 and C80 are oxidised to a cystine.

It belongs to the fimbrial protein family.

Its subcellular location is the fimbrium. Functionally, part of the sfmACDHF fimbrial operon. Could contribute to adhesion to various surfaces in specific environmental niches. Increases adhesion to eukaryotic T24 bladder epithelial cells in the absence of fim genes. This is an uncharacterized protein from Escherichia coli (strain K12).